Reading from the N-terminus, the 385-residue chain is UPF0744 protein YSC83 (385 aa).

The protein belongs to the UPF0744 family.

The protein resides in the mitochondrion outer membrane. The polypeptide is UPF0744 protein YSC83 (YSC83) (Saccharomyces cerevisiae (strain ATCC 204508 / S288c) (Baker's yeast)).